Reading from the N-terminus, the 478-residue chain is Aspartate ammonia-lyase (478 aa).

L-aspartate contacts are provided by T104, S143, T144, N145, and T190. The tract at residues 320-329 is SS loop; sequence GSSIMPAKVN. Catalysis depends on S321, which acts as the Proton acceptor. 2 residues coordinate L-aspartate: S322 and K327.

This sequence belongs to the class-II fumarase/aspartase family. Aspartase subfamily. As to quaternary structure, homotetramer.

It catalyses the reaction L-aspartate = fumarate + NH4(+). Its function is as follows. Catalyzes the reversible conversion of L-aspartate to fumarate and ammonia. The polypeptide is Aspartate ammonia-lyase (aspA) (Escherichia coli O157:H7).